An 84-amino-acid chain; its full sequence is Small ribosomal subunit protein uS15 (84 aa).

This sequence belongs to the universal ribosomal protein uS15 family. In terms of assembly, part of the 30S ribosomal subunit. Forms a bridge to the 50S subunit in the 70S ribosome, contacting the 23S rRNA.

In terms of biological role, one of the primary rRNA binding proteins, it binds directly to 16S rRNA where it helps nucleate assembly of the platform of the 30S subunit by binding and bridging several RNA helices of the 16S rRNA. Forms an intersubunit bridge (bridge B4) with the 23S rRNA of the 50S subunit in the ribosome. The chain is Small ribosomal subunit protein uS15 from Fervidobacterium nodosum (strain ATCC 35602 / DSM 5306 / Rt17-B1).